The sequence spans 280 residues: Probable endonuclease 4 (280 aa).

Zn(2+) is bound by residues histidine 69, histidine 109, glutamate 145, aspartate 179, histidine 182, histidine 216, aspartate 229, histidine 231, and glutamate 261.

This sequence belongs to the AP endonuclease 2 family. Zn(2+) serves as cofactor.

The catalysed reaction is Endonucleolytic cleavage to 5'-phosphooligonucleotide end-products.. Functionally, endonuclease IV plays a role in DNA repair. It cleaves phosphodiester bonds at apurinic or apyrimidinic (AP) sites, generating a 3'-hydroxyl group and a 5'-terminal sugar phosphate. This chain is Probable endonuclease 4, found in Pelodictyon phaeoclathratiforme (strain DSM 5477 / BU-1).